The chain runs to 270 residues: tRNA pseudouridine synthase A (270 aa).

Asp-60 (nucleophile) is an active-site residue. The RNA binding stretch occupies residues 107-111; it reads FHARF. Substrate is bound at residue Tyr-118. The interval 168–172 is interaction with tRNA; the sequence is QCQSR.

Belongs to the tRNA pseudouridine synthase TruA family. As to quaternary structure, homodimer.

It catalyses the reaction uridine(38/39/40) in tRNA = pseudouridine(38/39/40) in tRNA. Formation of pseudouridine at positions 38, 39 and 40 in the anticodon stem and loop of transfer RNAs. The chain is tRNA pseudouridine synthase A from Klebsiella pneumoniae subsp. pneumoniae (strain ATCC 700721 / MGH 78578).